Here is a 500-residue protein sequence, read N- to C-terminus: Cryptochrome DASH (500 aa).

The Photolyase/cryptochrome alpha/beta domain occupies 4–138; the sequence is KTVLVWYRND…PVRSFWGTTL (135 aa).

It belongs to the DNA photolyase class-1 family. FAD is required as a cofactor. Requires (6R)-5,10-methylene-5,6,7,8-tetrahydrofolate as cofactor.

Its function is as follows. May have a photoreceptor function. Binds DNA; probably functions as a transcriptional repressor. The polypeptide is Cryptochrome DASH (cry) (Gloeobacter violaceus (strain ATCC 29082 / PCC 7421)).